Reading from the N-terminus, the 421-residue chain is NADH-quinone oxidoreductase subunit F (421 aa).

54–63 (GRGGAGFSTG) lines the NAD(+) pocket. Position 166 to 213 (166 to 213 (GAGAYICGEETALLESLEGKKGMPRLKPPFPAGFGLYGCPTTINNVES)) interacts with FMN. [4Fe-4S] cluster contacts are provided by C344, C347, C350, and C390.

It belongs to the complex I 51 kDa subunit family. Requires FMN as cofactor. It depends on [4Fe-4S] cluster as a cofactor.

It catalyses the reaction a quinone + NADH + 5 H(+)(in) = a quinol + NAD(+) + 4 H(+)(out). In terms of biological role, NDH-1 shuttles electrons from NADH, via FMN and iron-sulfur (Fe-S) centers, to quinones in the respiratory chain. Couples the redox reaction to proton translocation (for every two electrons transferred, four hydrogen ions are translocated across the cytoplasmic membrane), and thus conserves the redox energy in a proton gradient. This is NADH-quinone oxidoreductase subunit F (nuoF) from Rickettsia rickettsii (strain Sheila Smith).